Consider the following 871-residue polypeptide: MDGESEVDFSSNSITPLWRRRSIPQPHQVLGRSKPRPQSYQSPNGLLITDFPVEDGGTLLAAQIPAQVPTASDSRTVHRSPLLLGAQRRAVANGGTASPEYRAASPRLRRPKSPKLPKAVPGGSPKSPANGAVTLPAPPPPPVLRPPRTPNAPAPCTPEEDLTGLTASPVPSPTANGLAANNDSPGSGSQSGRKAKDPERGLFPGPQKSSSEQKLPLQRLPSQENELLENPSVVLSTNSPAALKVGKQQIIPKSLASEIKISKSNNQNVEPHKRLLKVRSMVEGLGGPLGHAGEESEVDNDVDSPGSLRRGLRSTSYRRAVVSGFDFDSPTSSKKKNRMSQPVLKVVMEDKEKFSSLGRIKKKMLKGQGTFDGEENAVLYQNYKEKALDIDSDEESEPKEQKSDEKIVIHHKPLRSTWSQLSAVKRKGLSQTVSQEERKRQEAIFEVISSEHSYLLSLEILIRMFKNSKELSDTMTKTERHHLFSNITDVCEASKKFFIELEARHQNNIFIDDISDIVEKHTASTFDPYVKYCTNEVYQQRTLQKLLATNPSFKEVLSRIESHEDCRNLPMISFLILPMQRVTRLPLLMDTICQKTPKDSPKYEVCKRALKEVSKLVRLCNEGARKMERTEMMYTINSQLEFKIKPFPLVSSSRWLVKRGELTAYVEDTVLFSRRTSKQQVYFFLFNDVLIITKKKSEESYNVNDYSLRDQLLVESCDNEELNSSPGKNSSTMLYSRQSSASHLFTLTVLSNHANEKVEMLLGAETQSERARWITALGHSSGKPPADRTSLTQVEIVRSFTAKQPDELSLQVADVVLIYQRVSDGWYEGERLRDGERGWFPMECAKEITCQATIDKNVERMGRLLGLETNV.

3 disordered regions span residues Met1–Thr49, Ala86–Val233, and Pro288–Arg310. A Phosphoserine modification is found at Ser22. Residues Pro136–Cys156 are compositionally biased toward pro residues. A compositionally biased stretch (polar residues) spans Pro173–Gly192. Ser392 bears the Phosphoserine mark. Residues Lys439 to Gly623 form the DH domain. Residues Trp655–Gly782 form the PH domain. In terms of domain architecture, SH3 spans Thr789–Cys850.

Interacts with ICAM1 and RHOG. As to expression, isoform 1 is broadly expressed, with highest levels in liver (at protein level). Certain mRNA species appear to be specifically expressed in prostate and liver.

The protein resides in the cell projection. Its subcellular location is the ruffle. In terms of biological role, activates RhoG GTPase by promoting the exchange of GDP by GTP. Required for the formation of membrane ruffles during macropinocytosis. Required for the formation of cup-like structures during trans-endothelial migration of leukocytes. In case of Salmonella enterica infection, activated by SopB, which induces cytoskeleton rearrangements and promotes bacterial entry. This Homo sapiens (Human) protein is Rho guanine nucleotide exchange factor 26 (ARHGEF26).